The following is a 505-amino-acid chain: 2-isopropylmalate synthase (505 aa).

Positions I5–Y269 constitute a Pyruvate carboxyltransferase domain. Mn(2+) is bound by residues D14, H204, H206, and N240. Positions S393 to R505 are regulatory domain.

The protein belongs to the alpha-IPM synthase/homocitrate synthase family. LeuA type 1 subfamily. As to quaternary structure, homodimer. Mn(2+) is required as a cofactor.

Its subcellular location is the cytoplasm. It catalyses the reaction 3-methyl-2-oxobutanoate + acetyl-CoA + H2O = (2S)-2-isopropylmalate + CoA + H(+). Its pathway is amino-acid biosynthesis; L-leucine biosynthesis; L-leucine from 3-methyl-2-oxobutanoate: step 1/4. Catalyzes the condensation of the acetyl group of acetyl-CoA with 3-methyl-2-oxobutanoate (2-ketoisovalerate) to form 3-carboxy-3-hydroxy-4-methylpentanoate (2-isopropylmalate). In Sediminispirochaeta smaragdinae (strain DSM 11293 / JCM 15392 / SEBR 4228) (Spirochaeta smaragdinae), this protein is 2-isopropylmalate synthase.